Here is a 289-residue protein sequence, read N- to C-terminus: Protoheme IX farnesyltransferase (289 aa).

Helical transmembrane passes span valine 9–methionine 29, leucine 40–cysteine 60, leucine 89–tryptophan 109, proline 110–leucine 130, threonine 134–serine 154, alanine 155–threonine 175, tyrosine 190–arginine 209, valine 228–valine 248, and phenylalanine 269–valine 289.

It belongs to the UbiA prenyltransferase family. Protoheme IX farnesyltransferase subfamily.

It is found in the cell membrane. It catalyses the reaction heme b + (2E,6E)-farnesyl diphosphate + H2O = Fe(II)-heme o + diphosphate. It participates in porphyrin-containing compound metabolism; heme O biosynthesis; heme O from protoheme: step 1/1. Converts heme B (protoheme IX) to heme O by substitution of the vinyl group on carbon 2 of heme B porphyrin ring with a hydroxyethyl farnesyl side group. This chain is Protoheme IX farnesyltransferase, found in Frankia casuarinae (strain DSM 45818 / CECT 9043 / HFP020203 / CcI3).